A 225-amino-acid chain; its full sequence is THAP domain-containing protein 1 A (225 aa).

The THAP-type zinc finger occupies 5–57 (CSAYGCKNRYDKDKPISFHKFPLKRPLLCKKWEAAVRRAEFKPTKYSSICSDH). Residues 139 to 194 (VEDTVHQRRRIQQLEEQVDKLRKKLKIANQKCRRQERSLEKLEREVSEYREAKGSG) adopt a coiled-coil conformation.

Belongs to the THAP1 family.

It localises to the nucleus. It is found in the nucleoplasm. Functionally, DNA-binding transcription regulator that regulates endothelial cell proliferation and G1/S cell-cycle progression. Specifically binds the 5'-[AT]NTNN[GT]GGCA[AGT]-3' core DNA sequence and acts by modulating expression of pRB-E2F cell-cycle target genes. This Xenopus laevis (African clawed frog) protein is THAP domain-containing protein 1 A (thap1-a).